The chain runs to 91 residues: CRISPR-associated endoribonuclease Cas2 (91 aa).

Asp14 provides a ligand contact to Mg(2+).

The protein belongs to the CRISPR-associated endoribonuclease Cas2 protein family. Homodimer, forms a heterotetramer with a Cas1 homodimer. Mg(2+) serves as cofactor.

In terms of biological role, CRISPR (clustered regularly interspaced short palindromic repeat), is an adaptive immune system that provides protection against mobile genetic elements (viruses, transposable elements and conjugative plasmids). CRISPR clusters contain sequences complementary to antecedent mobile elements and target invading nucleic acids. CRISPR clusters are transcribed and processed into CRISPR RNA (crRNA). Functions as a ssRNA-specific endoribonuclease. Involved in the integration of spacer DNA into the CRISPR cassette. The protein is CRISPR-associated endoribonuclease Cas2 of Nanoarchaeum equitans (strain Kin4-M).